The primary structure comprises 338 residues: MKRFNAIRIGELVRIAVLVMPLLLGFGAPIYAAAEVHGEAGAHEAAAVHTDEAHGEAGEHAEGGHGEGGAGDVIMHHILDSNAMEFEPFGKFPLPKIVIGGFDLSITRHVVFMWLAALILLLVFGYVGNKYKSIKSNEAPGGVANAMEALVEFIRLDVAKSNIGEGYEKHMPYLLTVFVFILVLNLLGLIPYGASATGNINVTLTLSVFTFFITQVSAIKSNGIKGYLAHLTAGTHWALWIIMIPIEVIGLFTKPFALTIRLFANMTAGHIIILSLIFISFILKSYIVAIFVSVPFSIFIYLLEIFVSFLQAFIFTMLSALFIGLGSAHEGHEAEGAH.

The chain crosses the membrane as a helical span at residues 15-35; it reads IAVLVMPLLLGFGAPIYAAAE. Residues 45 to 66 form a disordered region; it reads AAAVHTDEAHGEAGEHAEGGHG. A compositionally biased stretch (basic and acidic residues) spans 49 to 65; it reads HTDEAHGEAGEHAEGGH. 7 helical membrane passes run 109-129, 174-194, 199-219, 238-258, 262-282, 287-307, and 308-328; these read HVVFMWLAALILLLVFGYVGN, LLTVFVFILVLNLLGLIPYGA, NINVTLTLSVFTFFITQVSAI, ALWIIMIPIEVIGLFTKPFAL, LFANMTAGHIIILSLIFISFI, IVAIFVSVPFSIFIYLLEIFV, and SFLQAFIFTMLSALFIGLGSA.

Belongs to the ATPase A chain family. F-type ATPases have 2 components, CF(1) - the catalytic core - and CF(0) - the membrane proton channel. CF(1) has five subunits: alpha(3), beta(3), gamma(1), delta(1), epsilon(1). CF(0) has four main subunits: a, b, b' and c.

The protein localises to the cell inner membrane. In terms of biological role, key component of the proton channel; it plays a direct role in the translocation of protons across the membrane. The polypeptide is ATP synthase subunit a (Chlorobium phaeobacteroides (strain BS1)).